The sequence spans 334 residues: Anthranilate phosphoribosyltransferase (334 aa).

Residues glycine 81, 84–85 (GD), threonine 89, 91–94 (NIST), 109–117 (KHGSRSVSS), and alanine 121 contribute to the 5-phospho-alpha-D-ribose 1-diphosphate site. Residue glycine 81 participates in anthranilate binding. Serine 93 lines the Mg(2+) pocket. Anthranilate is bound at residue arginine 167. Mg(2+)-binding residues include aspartate 225 and glutamate 226.

The protein belongs to the anthranilate phosphoribosyltransferase family. As to quaternary structure, homodimer. Mg(2+) serves as cofactor.

The enzyme catalyses N-(5-phospho-beta-D-ribosyl)anthranilate + diphosphate = 5-phospho-alpha-D-ribose 1-diphosphate + anthranilate. It functions in the pathway amino-acid biosynthesis; L-tryptophan biosynthesis; L-tryptophan from chorismate: step 2/5. Its function is as follows. Catalyzes the transfer of the phosphoribosyl group of 5-phosphorylribose-1-pyrophosphate (PRPP) to anthranilate to yield N-(5'-phosphoribosyl)-anthranilate (PRA). In Actinobacillus pleuropneumoniae serotype 5b (strain L20), this protein is Anthranilate phosphoribosyltransferase.